Consider the following 291-residue polypeptide: ATP synthase gamma chain (291 aa).

Belongs to the ATPase gamma chain family. F-type ATPases have 2 components, CF(1) - the catalytic core - and CF(0) - the membrane proton channel. CF(1) has five subunits: alpha(3), beta(3), gamma(1), delta(1), epsilon(1). CF(0) has three main subunits: a, b and c.

The protein resides in the cell inner membrane. Its function is as follows. Produces ATP from ADP in the presence of a proton gradient across the membrane. The gamma chain is believed to be important in regulating ATPase activity and the flow of protons through the CF(0) complex. The polypeptide is ATP synthase gamma chain (Verminephrobacter eiseniae (strain EF01-2)).